A 140-amino-acid polypeptide reads, in one-letter code: MTSPLLESRRQLRKCAFQALMSLEFGTNVETACRFAYTHDREDTDVQLPAFLIDLVSGVQAKKEELDKQITQHLKVGWTIERLTLVERNLLRLGVFEITSFDTPQLVAVNEAIELAKDFSDQKSARFINGLLSQFVTEEQ.

This sequence belongs to the NusB family.

Functionally, involved in transcription antitermination. Required for transcription of ribosomal RNA (rRNA) genes. Binds specifically to the boxA antiterminator sequence of the ribosomal RNA (rrn) operons. In Streptococcus pneumoniae (strain 70585), this protein is Transcription antitermination protein NusB.